Here is a 520-residue protein sequence, read N- to C-terminus: Putative cytochrome P450 CYP13A4 (520 aa).

Cys464 is a binding site for heme.

It belongs to the cytochrome P450 family. Heme serves as cofactor.

Cytochromes P450 are a group of heme-thiolate monooxygenases. They oxidize a variety of structurally unrelated compounds, including steroids, fatty acids, and xenobiotics. The protein is Putative cytochrome P450 CYP13A4 (cyp-13A4) of Caenorhabditis elegans.